The sequence spans 431 residues: Trigger factor (431 aa).

Positions 164–249 constitute a PPIase FKBP-type domain; sequence GDIAVIDFKG…IKEIKRKELP (86 aa).

It belongs to the FKBP-type PPIase family. Tig subfamily.

Its subcellular location is the cytoplasm. The enzyme catalyses [protein]-peptidylproline (omega=180) = [protein]-peptidylproline (omega=0). Its function is as follows. Involved in protein export. Acts as a chaperone by maintaining the newly synthesized protein in an open conformation. Functions as a peptidyl-prolyl cis-trans isomerase. This Clostridium acetobutylicum (strain ATCC 824 / DSM 792 / JCM 1419 / IAM 19013 / LMG 5710 / NBRC 13948 / NRRL B-527 / VKM B-1787 / 2291 / W) protein is Trigger factor.